The sequence spans 831 residues: Pleckstrin homology-like domain family B member 1 (831 aa).

A compositionally biased stretch (basic residues) spans 1–11 (LTLGARGRRTR). Positions 1–73 (LTLGARGRRT…PIPRERKNSI (73 aa)) are disordered. Omega-N-methylarginine is present on Arg6. Ser12 and Ser14 each carry phosphoserine. Position 16 is a phosphothreonine (Thr16). 8 positions are modified to phosphoserine: Ser27, Ser33, Ser45, Ser49, Ser57, Ser72, Ser77, and Ser175. Residues 39–51 (GSLTGASPRQSPH) are compositionally biased toward polar residues. Disordered stretches follow at residues 160-209 (RSGE…LQGE) and 416-465 (NGDM…QNGT). Positions 174 to 188 (ESMERSDEENLKEEC) are enriched in basic and acidic residues. Residues 180–306 (DEENLKEECS…TETKLFEDLE (127 aa)) adopt a coiled-coil conformation. Ser421 and Ser467 each carry phosphoserine. Low complexity predominate over residues 421–442 (SPLPRTRSGPLPSSSGSSSSSS). The interval 584–603 (SMETSISTGGNSACSPDNMS) is disordered. Residues 610-676 (MGKIEEMEKM…QQLVEKEVKL (67 aa)) are a coiled coil. The region spanning 721-824 (SKVCRGYLIK…WMDVIVTGAE (104 aa)) is the PH domain.

The polypeptide is Pleckstrin homology-like domain family B member 1 (Phldb1) (Rattus norvegicus (Rat)).